The sequence spans 398 residues: Methionine aminopeptidase 1A (398 aa).

Position 2 is an N-acetylalanine (A2). The segment at 12–65 (TLSCARCEKPAHLQCPKCIDLKLPREQASFCTQECFKAAWSSHKSVHVKAQLSS) adopts a C6H2-type zinc-finger fold. Zn(2+) contacts are provided by C15, C18, C26, C29, C42, C46, H54, and H58. An a protein-binding site is contributed by H214. Residues D231, D242, and H305 each coordinate Zn(2+). H312 lines the a protein pocket. Zn(2+)-binding residues include E338 and E369.

This sequence belongs to the peptidase M24A family. Methionine aminopeptidase type 1 subfamily. In terms of assembly, associates with the 60S ribosomal subunit of the 80S translational complex. Zn(2+) serves as cofactor. Requires Co(2+) as cofactor. Mn(2+) is required as a cofactor. It depends on Fe(2+) as a cofactor. Ubiquitous.

Its subcellular location is the cytoplasm. The enzyme catalyses Release of N-terminal amino acids, preferentially methionine, from peptides and arylamides.. Cotranslationally removes the N-terminal methionine from nascent proteins. The N-terminal methionine is often cleaved when the second residue in the primary sequence is small and uncharged (Met-Ala-, Cys, Gly, Pro, Ser, Thr, or Val). This is Methionine aminopeptidase 1A (MAP1A) from Arabidopsis thaliana (Mouse-ear cress).